A 530-amino-acid chain; its full sequence is UDP-glucuronosyltransferase 2B31 (530 aa).

The first 24 residues, 1-24 (MSMKWISVLLGLQLSCYFSSGSCG), serve as a signal peptide directing secretion. An N6-succinyllysine modification is found at Lys136. The N-linked (GlcNAc...) asparagine glycan is linked to Asn316. A helical membrane pass occupies residues 495–515 (IGFLLACVATAIFVTTQCCLF).

The protein belongs to the UDP-glycosyltransferase family.

The protein resides in the microsome membrane. It is found in the endoplasmic reticulum membrane. The catalysed reaction is glucuronate acceptor + UDP-alpha-D-glucuronate = acceptor beta-D-glucuronoside + UDP + H(+). Functionally, UDPGTs are of major importance in the conjugation and subsequent elimination of potentially toxic xenobiotics and endogenous compounds. This isozyme has glucuronidating capacity on phenols, opioids, and carboxylic acid-containing drugs. This chain is UDP-glucuronosyltransferase 2B31 (UGT2B31), found in Canis lupus familiaris (Dog).